The primary structure comprises 178 residues: uncharacterized protein (178 aa).

The signal sequence occupies residues 1–23 (MTMFKKISVLFFTLILAGCSSWS).

This is an uncharacterized protein from Haemophilus influenzae (strain ATCC 51907 / DSM 11121 / KW20 / Rd).